Consider the following 230-residue polypeptide: Small ribosomal subunit protein uS3 (230 aa).

The KH type-2 domain occupies 43–95; it reads VNRVIIYSARPKMISEERKAHLAKLLELKFGLEKPVIEVLPIENPNLDAHVIA.

This sequence belongs to the universal ribosomal protein uS3 family. In terms of assembly, part of the 30S ribosomal subunit.

Functionally, binds the lower part of the 30S subunit head. The chain is Small ribosomal subunit protein uS3 from Nanoarchaeum equitans (strain Kin4-M).